Consider the following 209-residue polypeptide: Interleukin-6 (209 aa).

Residues 1–26 form the signal peptide; that stretch reads RFTSAFSPVAFSLGLLLVMATAFPTP. Residues 28–47 are disordered; that stretch reads PVGGESQADATSNRPPLTSP. C69 and C75 are oxidised to a cystine. At S78 the chain carries Phosphoserine. Cysteines 98 and 108 form a disulfide.

It belongs to the IL-6 superfamily. In terms of assembly, component of a hexamer of two molecules each of IL6, IL6R and IL6ST; first binds to IL6R to associate with the signaling subunit IL6ST. Interacts with IL6R (via the N-terminal ectodomain); this interaction may be affected by IL6R-binding with SORL1, hence decreasing IL6 cis signaling. Interacts with SORL1 (via the N-terminal ectodomain); this interaction leads to IL6 internalization and lysosomal degradation. May form a trimeric complex with the soluble SORL1 ectodomain and soluble IL6R receptor; this interaction might stabilize circulating IL6, hence promoting IL6 trans signaling.

The protein localises to the secreted. Functionally, cytokine with a wide variety of biological functions in immunity, tissue regeneration, and metabolism. Binds to IL6R, then the complex associates to the signaling subunit IL6ST/gp130 to trigger the intracellular IL6-signaling pathway. The interaction with the membrane-bound IL6R and IL6ST stimulates 'classic signaling', whereas the binding of IL6 and soluble IL6R to IL6ST stimulates 'trans-signaling'. Alternatively, 'cluster signaling' occurs when membrane-bound IL6:IL6R complexes on transmitter cells activate IL6ST receptors on neighboring receiver cells. IL6 is a potent inducer of the acute phase response. Rapid production of IL6 contributes to host defense during infection and tissue injury, but excessive IL6 synthesis is involved in disease pathology. In the innate immune response, is synthesized by myeloid cells, such as macrophages and dendritic cells, upon recognition of pathogens through toll-like receptors (TLRs) at the site of infection or tissue injury. In the adaptive immune response, is required for the differentiation of B cells into immunoglobulin-secreting cells. Plays a major role in the differentiation of CD4(+) T cell subsets. Essential factor for the development of T follicular helper (Tfh) cells that are required for the induction of germinal-center formation. Required to drive naive CD4(+) T cells to the Th17 lineage. Also required for proliferation of myeloma cells and the survival of plasmablast cells. In terms of biological role, acts as an essential factor in bone homeostasis and on vessels directly or indirectly by induction of VEGF, resulting in increased angiogenesis activity and vascular permeability. Induces, through 'trans-signaling' and synergistically with IL1B and TNF, the production of VEGF. Involved in metabolic controls, is discharged into the bloodstream after muscle contraction increasing lipolysis and improving insulin resistance. 'Trans-signaling' in central nervous system also regulates energy and glucose homeostasis. Mediates, through GLP-1, crosstalk between insulin-sensitive tissues, intestinal L cells and pancreatic islets to adapt to changes in insulin demand. Also acts as a myokine. Plays a protective role during liver injury, being required for maintenance of tissue regeneration. Also has a pivotal role in iron metabolism by regulating HAMP/hepcidin expression upon inflammation or bacterial infection. Through activation of IL6ST-YAP-NOTCH pathway, induces inflammation-induced epithelial regeneration. The sequence is that of Interleukin-6 (IL6) from Phoca vitulina (Harbor seal).